The primary structure comprises 303 residues: UDP-3-O-acyl-N-acetylglucosamine deacetylase (303 aa).

Residues histidine 78, histidine 237, and aspartate 241 each coordinate Zn(2+). The Proton donor role is filled by histidine 264.

Belongs to the LpxC family. Requires Zn(2+) as cofactor.

It catalyses the reaction a UDP-3-O-[(3R)-3-hydroxyacyl]-N-acetyl-alpha-D-glucosamine + H2O = a UDP-3-O-[(3R)-3-hydroxyacyl]-alpha-D-glucosamine + acetate. Its pathway is glycolipid biosynthesis; lipid IV(A) biosynthesis; lipid IV(A) from (3R)-3-hydroxytetradecanoyl-[acyl-carrier-protein] and UDP-N-acetyl-alpha-D-glucosamine: step 2/6. Functionally, catalyzes the hydrolysis of UDP-3-O-myristoyl-N-acetylglucosamine to form UDP-3-O-myristoylglucosamine and acetate, the committed step in lipid A biosynthesis. This chain is UDP-3-O-acyl-N-acetylglucosamine deacetylase, found in Pseudomonas paraeruginosa (strain DSM 24068 / PA7) (Pseudomonas aeruginosa (strain PA7)).